The chain runs to 1914 residues: Diacylglycerol kinase eta (1914 aa).

Basic and acidic residues predominate over residues M1–H10. Residues M1 to S37 are disordered. Over residues R23 to S37 the composition is skewed to low complexity. One can recognise a PH domain in the interval A82–A175. Phorbol-ester/DAG-type zinc fingers lie at residues H195–C245 and P268–C319. The region spanning G350–K486 is the DAGKc domain. Disordered stretches follow at residues E621–E642, G783–T805, T1016–I1053, Q1116–N1135, and P1175–L1216. Polar residues predominate over residues P1175–K1187. The 64-residue stretch at W1851–N1914 folds into the SAM domain.

It belongs to the eukaryotic diacylglycerol kinase family.

Its subcellular location is the cytoplasm. The enzyme catalyses a 1,2-diacyl-sn-glycerol + ATP = a 1,2-diacyl-sn-glycero-3-phosphate + ADP + H(+). In terms of biological role, phosphorylates diacylglycerol (DAG) to generate phosphatidic acid (PA). The polypeptide is Diacylglycerol kinase eta (Drosophila sechellia (Fruit fly)).